A 149-amino-acid chain; its full sequence is Calmodulin (149 aa).

Residue A2 is modified to N-acetylalanine. EF-hand domains are found at residues 8-43 (EQIS…LGQN), 44-79 (PTEA…KMRD), 81-116 (DSEE…LGEK), and 117-149 (LTDN…MLSK). Ca(2+) contacts are provided by D21, D23, D25, T27, E32, D57, D59, N61, T63, E68, D94, D96, N98, Y100, E105, D130, D132, D134, Q136, and E141.

Belongs to the calmodulin family.

Its function is as follows. Calmodulin mediates the control of a large number of enzymes, ion channels and other proteins by Ca(2+). Among the enzymes to be stimulated by the calmodulin-Ca(2+) complex are a number of protein kinases and phosphatases. In Pleurotus ostreatus (Oyster mushroom), this protein is Calmodulin (CMD1).